A 261-amino-acid chain; its full sequence is Glutamate racemase (261 aa).

Residues D7–S8 and Y39–G40 each bind substrate. C71 serves as the catalytic Proton donor/acceptor. N72–T73 provides a ligand contact to substrate. The active-site Proton donor/acceptor is the C184. A substrate-binding site is contributed by T185–H186.

Belongs to the aspartate/glutamate racemases family.

The catalysed reaction is L-glutamate = D-glutamate. It participates in cell wall biogenesis; peptidoglycan biosynthesis. In terms of biological role, provides the (R)-glutamate required for cell wall biosynthesis. The polypeptide is Glutamate racemase (Aliarcobacter butzleri (strain RM4018) (Arcobacter butzleri)).